The following is an 821-amino-acid chain: Glycogen phosphorylase (821 aa).

The residue at position 667 (Lys-667) is an N6-(pyridoxal phosphate)lysine.

Belongs to the glycogen phosphorylase family. Requires pyridoxal 5'-phosphate as cofactor.

It catalyses the reaction [(1-&gt;4)-alpha-D-glucosyl](n) + phosphate = [(1-&gt;4)-alpha-D-glucosyl](n-1) + alpha-D-glucose 1-phosphate. Functionally, phosphorylase is an important allosteric enzyme in carbohydrate metabolism. Enzymes from different sources differ in their regulatory mechanisms and in their natural substrates. However, all known phosphorylases share catalytic and structural properties. In Haemophilus influenzae (strain ATCC 51907 / DSM 11121 / KW20 / Rd), this protein is Glycogen phosphorylase (glgP).